Reading from the N-terminus, the 735-residue chain is Muskelin (735 aa).

Ala-2 carries the post-translational modification N-acetylalanine. The LisH domain maps to 172 to 204 (REQEAIRLCLKHFRQHNYTEAFESLQKKTKIAL). The region spanning 206–258 (HPMLTDMHDKLVLKGDFDACEELIEKAVNDGLFNQYISQQEYKPRWSQIIPKS) is the CTLH domain. Kelch repeat units lie at residues 284–330 (TVYL…SCHK), 339–391 (QIYT…FDHQ), 400–458 (MIYT…SRIG), 469–515 (CLYV…TGFT), 526–578 (EIHV…SLQE), and 597–651 (VHYL…AQMD). The tract at residues 701–735 (DHTYAQRTQLFDTLVNFFPDSMTPPKGNLVDLITL) is important for location in the cytosol.

In terms of assembly, homodimer; may form higher oligomers. Identified in the CTLH complex that contains GID4, RANBP9 and/or RANBP10, MKLN1, MAEA, RMND5A (or alternatively its paralog RMND5B), GID8, ARMC8, WDR26 and YPEL5. Within this complex, MAEA, RMND5A (or alternatively its paralog RMND5B), GID8, WDR26, and RANBP9 and/or RANBP10 form the catalytic core, while GID4, MKLN1, ARMC8 and YPEL5 have ancillary roles. Interacts with RANBP9. Part of a complex consisting of RANBP9, MKLN1 and GID8. Interacts with GABRA1. Interacts with the C-terminal tail of PTGER3. As to expression, detected in brain, especially in hippocampus and cerebellum (at protein level).

The protein localises to the cytoplasm. Its subcellular location is the cytosol. It localises to the nucleus. The protein resides in the nucleoplasm. It is found in the cell projection. The protein localises to the ruffle. Its subcellular location is the cell cortex. It localises to the synapse. The protein resides in the postsynapse. Functionally, component of the CTLH E3 ubiquitin-protein ligase complex that selectively accepts ubiquitin from UBE2H and mediates ubiquitination and subsequent proteasomal degradation of the transcription factor HBP1. Required for internalization of the GABA receptor GABRA1 from the cell membrane via endosomes and subsequent GABRA1 degradation. Acts as a mediator of cell spreading and cytoskeletal responses to the extracellular matrix component THBS1. This Mus musculus (Mouse) protein is Muskelin (Mkln1).